Reading from the N-terminus, the 485-residue chain is Noelin (485 aa).

A signal peptide spans 1-16 (MSVPLLKIGVVLSTMA). Asn-33, Asn-103, Asn-187, Asn-288, Asn-307, Asn-394, Asn-431, and Asn-473 each carry an N-linked (GlcNAc...) asparagine glycan. Residues 87 to 225 (RDARTKQLRQ…ERLRACMQKL (139 aa)) are a coiled coil. Residues 226-478 (ACGKLTGISD…QILYNVTLFH (253 aa)) enclose the Olfactomedin-like domain. A disulfide bridge links Cys-227 with Cys-409.

Homotetramer; disulfide-linked. Dimer of dimers, giving rise to a V-shaped homotretramer. Isoform 1 and isoform 3 interact with RTN4R. Identified in a complex with RTN4R and LINGO1. Peripherally associated with AMPAR complex. AMPAR complex consists of an inner core made of 4 pore-forming GluA/GRIA proteins (GRIA1, GRIA2, GRIA3 and GRIA4) and 4 major auxiliary subunits arranged in a twofold symmetry. One of the two pairs of distinct binding sites is occupied either by CNIH2, CNIH3 or CACNG2, CACNG3. The other harbors CACNG2, CACNG3, CACNG4, CACNG8 or GSG1L. This inner core of AMPAR complex is complemented by outer core constituents binding directly to the GluA/GRIA proteins at sites distinct from the interaction sites of the inner core constituents. Outer core constituents include at least PRRT1, PRRT2, CKAMP44/SHISA9, FRRS1L and NRN1. The proteins of the inner and outer core serve as a platform for other, more peripherally associated AMPAR constituents, including OLFM1. Alone or in combination, these auxiliary subunits control the gating and pharmacology of the AMPAR complex and profoundly impact their biogenesis and protein processing. Interacts with OLFM2.

The protein localises to the secreted. It is found in the synapse. The protein resides in the endoplasmic reticulum. Its subcellular location is the cell projection. It localises to the axon. The protein localises to the perikaryon. In terms of biological role, contributes to the regulation of axonal growth in the embryonic and adult central nervous system by inhibiting interactions between RTN4R and LINGO1. Inhibits RTN4R-mediated axon growth cone collapse. May play an important role in regulating the production of neural crest cells by the neural tube. May be required for normal responses to olfactory stimuli. The sequence is that of Noelin (OLFM1) from Homo sapiens (Human).